The following is a 357-amino-acid chain: MNDKIAIIGAGSWGTAVACSLGKNGHRVVLWSHTAGVADSINTEHINVKYLPKHKLPKTVSASTDMEEVCKDASFIFLASPSLYLTSAVEELLKFAPFSHDDGEMPYPTIAVLTKGFIPDENGEPQFIIDVLEKMLPDFYKNHLVYVAGPSHGEEVAEGKLTGLIAASQNPMCSIRCREILRSRSLLVYSSLDIIGVQVCAAAKNVVAVAFGVLDALTVTSDIFGDNTESLLLAAGLNEIQTIGRAMGATHPETFTSISGVGDLDVTCRSKYGRNRRFGNEIITKKILLSFENLDDLIKNIDKIGYLPEGVVACKYLNILAEKRNLKLPICSGLYKILNKELKPLDLIENLLQGDTK.

Ser12, Trp13, His33, and Lys115 together coordinate NADPH. Sn-glycerol 3-phosphate-binding residues include Lys115, Gly149, and Ser151. Gly153 contributes to the NADPH binding site. Sn-glycerol 3-phosphate contacts are provided by Lys204, Asp263, Arg274, and Asn275. The Proton acceptor role is filled by Lys204. Arg274 provides a ligand contact to NADPH. Positions 307 and 309 each coordinate NADPH.

The protein belongs to the NAD-dependent glycerol-3-phosphate dehydrogenase family.

It is found in the cytoplasm. The catalysed reaction is sn-glycerol 3-phosphate + NAD(+) = dihydroxyacetone phosphate + NADH + H(+). It catalyses the reaction sn-glycerol 3-phosphate + NADP(+) = dihydroxyacetone phosphate + NADPH + H(+). The protein operates within membrane lipid metabolism; glycerophospholipid metabolism. In terms of biological role, catalyzes the reduction of the glycolytic intermediate dihydroxyacetone phosphate (DHAP) to sn-glycerol 3-phosphate (G3P), the key precursor for phospholipid synthesis. The polypeptide is Glycerol-3-phosphate dehydrogenase [NAD(P)+] (Treponema denticola (strain ATCC 35405 / DSM 14222 / CIP 103919 / JCM 8153 / KCTC 15104)).